A 470-amino-acid chain; its full sequence is ATP synthase subunit beta (470 aa).

An ATP-binding site is contributed by 155 to 162; it reads GGAGVGKT.

Belongs to the ATPase alpha/beta chains family. F-type ATPases have 2 components, CF(1) - the catalytic core - and CF(0) - the membrane proton channel. CF(1) has five subunits: alpha(3), beta(3), gamma(1), delta(1), epsilon(1). CF(0) has three main subunits: a(1), b(2) and c(9-12). The alpha and beta chains form an alternating ring which encloses part of the gamma chain. CF(1) is attached to CF(0) by a central stalk formed by the gamma and epsilon chains, while a peripheral stalk is formed by the delta and b chains.

The protein resides in the cell membrane. The catalysed reaction is ATP + H2O + 4 H(+)(in) = ADP + phosphate + 5 H(+)(out). Its function is as follows. Produces ATP from ADP in the presence of a proton gradient across the membrane. The catalytic sites are hosted primarily by the beta subunits. The chain is ATP synthase subunit beta from Staphylococcus haemolyticus (strain JCSC1435).